The sequence spans 212 residues: Ribosomal RNA large subunit methyltransferase E (212 aa).

The segment at 1-26 is disordered; that stretch reads MPAERPSVSQKPKNPYKRPDAFTKAA. Glycine 63, tryptophan 65, aspartate 83, aspartate 101, and aspartate 122 together coordinate S-adenosyl-L-methionine. Lysine 162 serves as the catalytic Proton acceptor.

It belongs to the class I-like SAM-binding methyltransferase superfamily. RNA methyltransferase RlmE family.

The protein resides in the cytoplasm. The enzyme catalyses uridine(2552) in 23S rRNA + S-adenosyl-L-methionine = 2'-O-methyluridine(2552) in 23S rRNA + S-adenosyl-L-homocysteine + H(+). Its function is as follows. Specifically methylates the uridine in position 2552 of 23S rRNA at the 2'-O position of the ribose in the fully assembled 50S ribosomal subunit. The sequence is that of Ribosomal RNA large subunit methyltransferase E from Sorangium cellulosum (strain So ce56) (Polyangium cellulosum (strain So ce56)).